We begin with the raw amino-acid sequence, 419 residues long: Dual specificity mitogen-activated protein kinase kinase 7 (419 aa).

Ala-2 carries the post-translational modification N-acetylalanine. Positions 2–30 form a coiled coil; sequence AASSLEQKLSRLEAKLKQENREARRRIDL. Residues 18 to 30 show a composition bias toward basic and acidic residues; it reads KQENREARRRIDL. Residues 18–76 are disordered; that stretch reads KQENREARRRIDLNLDISPQRPRPTLQLPLANDGGSRSPSSESSPQHPTPPARPRHMLG. A compositionally biased stretch (low complexity) spans 36–63; that stretch reads PQRPRPTLQLPLANDGGSRSPSSESSPQ. Positions 37–57 are d domain; that stretch reads QRPRPTLQLPLANDGGSRSPS. The Protein kinase domain maps to 120–380; it reads LENLGEMGSG…YNKLLEHSFI (261 aa). Residues 126–134 and Lys-149 each bind ATP; that span reads MGSGTCGQV. Asp-243 functions as the Proton acceptor in the catalytic mechanism. Ser-271 carries the phosphoserine; by MAP3K modification. Thr-275 carries the post-translational modification Phosphothreonine; by MAP3K. The tract at residues 377 to 400 is DVD domain; sequence HSFIKRYETLEVDVASWFKDVMAK. The residue at position 411 (Ser-411) is a Phosphoserine.

This sequence belongs to the protein kinase superfamily. STE Ser/Thr protein kinase family. MAP kinase kinase subfamily. In terms of assembly, interacts with isoform 1 of VRK2. Interacts (via its D domain) with its substrates MAPK8/JNK1, MAPK9/JNK2 and MAPK10/JNK3. Interacts (via its DVD domain) with MAP3Ks activators like MAP3K5/ASK1 and MAP3K1/MEKK1. Interacts with MAPK8IP1/JIP1, MAPK8IP2/JIP2 and MAPK8IP3/JIP3 scaffold proteins. Interacts with RASSF7, the interaction promotes phosphorylation. Found in a complex with SH3RF1, RAC1, MAP3K11/MLK3, MAPK8IP1/JIP1 and MAPK8/JNK1. Found in a complex with SH3RF1, RAC2, MAP3K7/TAK1, MAPK8IP1/JIP1, MAPK8/JNK1 and MAPK9/JNK2. Mg(2+) is required as a cofactor. Post-translationally, activated by phosphorylation on Ser-271 and Thr-275 by MAP kinase kinase kinases (MAP3Ks). As to expression, ubiquitous; with highest level of expression in skeletal muscle. Isoform 3 is found at low levels in placenta, fetal liver, and skeletal muscle.

It localises to the nucleus. The protein resides in the cytoplasm. It carries out the reaction L-seryl-[protein] + ATP = O-phospho-L-seryl-[protein] + ADP + H(+). The enzyme catalyses L-threonyl-[protein] + ATP = O-phospho-L-threonyl-[protein] + ADP + H(+). It catalyses the reaction L-tyrosyl-[protein] + ATP = O-phospho-L-tyrosyl-[protein] + ADP + H(+). With respect to regulation, activated by phosphorylation by specific MAP kinase kinase kinases such as MAP3K1/MEKK1, MAP3K3/MEKK3, MAP3K11/MLK3 and MAP3K12/DLK. Functionally, dual specificity protein kinase which acts as an essential component of the MAP kinase signal transduction pathway. Essential component of the stress-activated protein kinase/c-Jun N-terminal kinase (SAP/JNK) signaling pathway. With MAP2K4/MKK4, is the one of the only known kinase to directly activate the stress-activated protein kinase/c-Jun N-terminal kinases MAPK8/JNK1, MAPK9/JNK2 and MAPK10/JNK3. MAP2K4/MKK4 and MAP2K7/MKK7 both activate the JNKs by phosphorylation, but they differ in their preference for the phosphorylation site in the Thr-Pro-Tyr motif. MAP2K4/MKK4 shows preference for phosphorylation of the Tyr residue and MAP2K7/MKK7 for the Thr residue. The monophosphorylation of JNKs on the Thr residue is sufficient to increase JNK activity indicating that MAP2K7/MKK7 is important to trigger JNK activity, while the additional phosphorylation of the Tyr residue by MAP2K4/MKK4 ensures optimal JNK activation. Has a specific role in JNK signal transduction pathway activated by pro-inflammatory cytokines. The MKK/JNK signaling pathway is also involved in mitochondrial death signaling pathway, including the release cytochrome c, leading to apoptosis. Part of a non-canonical MAPK signaling pathway, composed of the upstream MAP3K12 kinase and downstream MAP kinases MAPK1/ERK2 and MAPK3/ERK1, that enhances the AP-1-mediated transcription of APP in response to APOE. The polypeptide is Dual specificity mitogen-activated protein kinase kinase 7 (MAP2K7) (Homo sapiens (Human)).